A 737-amino-acid polypeptide reads, in one-letter code: DNA polymerase iota (737 aa).

A UmuC domain is found at 17–231 (IIHLDMDYFY…GDLKRVTGIG (215 aa)). D21 serves as a coordination point for Mg(2+). A 2'-deoxyribonucleoside 5'-triphosphate is bound by residues Y26 and R58. D113 is a binding site for Mg(2+). E114 is a catalytic residue. 2 DNA-binding regions span residues 212-277 (TYAE…FGRD) and 288-413 (KTIG…SKFQ). 4 disordered regions span residues 443-464 (TSLTSPTAESPTSDECAFRSSP), 482-515 (SPVPMLLDNGSESAATNSDFSDFSETEVEPSPKK), 557-581 (DSEKDFPMSTTPSTSTSAPAPRFRT), and 607-643 (LSSNASSTASSPLPSPMDDSIAMSAPSTTTLPFPSPT). Positions 491–502 (GSESAATNSDFS) are enriched in polar residues. Composition is skewed to low complexity over residues 563–577 (PMSTTPSTSTSAPAP), 607–618 (LSSNASSTASSP), and 632–643 (PSTTTLPFPSPT). Positions 669–686 (VDAEVFKELPVELQTELI) match the Ubiquitin-binding (UBM) motif.

Belongs to the DNA polymerase type-Y family. Mg(2+) serves as cofactor. Requires Mn(2+) as cofactor.

It localises to the nucleus. The enzyme catalyses DNA(n) + a 2'-deoxyribonucleoside 5'-triphosphate = DNA(n+1) + diphosphate. Its function is as follows. Error-prone DNA polymerase specifically involved in DNA repair. Plays an important role in translesion synthesis, where the normal high-fidelity DNA polymerases cannot proceed and DNA synthesis stalls. Favors Hoogsteen base-pairing in the active site. Inserts the correct base with higher fidelity opposite an adenosine template. Exhibits low fidelity and efficiency opposite a thymidine template, where it will preferentially insert guanosine. Forms a Schiff base with 5'-deoxyribose phosphate at abasic sites, but may not have lyase activity. The sequence is that of DNA polymerase iota from Drosophila melanogaster (Fruit fly).